A 488-amino-acid chain; its full sequence is ATP synthase subunit beta (488 aa).

An ATP-binding site is contributed by 164 to 171; that stretch reads GGAGVGKT.

Belongs to the ATPase alpha/beta chains family. F-type ATPases have 2 components, CF(1) - the catalytic core - and CF(0) - the membrane proton channel. CF(1) has five subunits: alpha(3), beta(3), gamma(1), delta(1), epsilon(1). CF(0) has four main subunits: a(1), b(1), b'(1) and c(9-12).

It is found in the cellular thylakoid membrane. The enzyme catalyses ATP + H2O + 4 H(+)(in) = ADP + phosphate + 5 H(+)(out). Functionally, produces ATP from ADP in the presence of a proton gradient across the membrane. The catalytic sites are hosted primarily by the beta subunits. The sequence is that of ATP synthase subunit beta from Prochlorococcus marinus (strain SARG / CCMP1375 / SS120).